A 208-amino-acid polypeptide reads, in one-letter code: Large ribosomal subunit protein bL25 (208 aa).

The interval 188-208 (AVETETEEETTTGESPAQPAE) is disordered.

It belongs to the bacterial ribosomal protein bL25 family. CTC subfamily. As to quaternary structure, part of the 50S ribosomal subunit; part of the 5S rRNA/L5/L18/L25 subcomplex. Contacts the 5S rRNA. Binds to the 5S rRNA independently of L5 and L18.

This is one of the proteins that binds to the 5S RNA in the ribosome where it forms part of the central protuberance. This Moorella thermoacetica (strain ATCC 39073 / JCM 9320) protein is Large ribosomal subunit protein bL25.